The sequence spans 62 residues: Large ribosomal subunit protein eL37 (62 aa).

4 residues coordinate Zn(2+): C20, C23, C35, and C38. The C4-type zinc finger occupies 20-38 (CRRCGRRSYNVAKGYCAAC).

It belongs to the eukaryotic ribosomal protein eL37 family. Requires Zn(2+) as cofactor.

Its function is as follows. Binds to the 23S rRNA. The sequence is that of Large ribosomal subunit protein eL37 (rpl37e) from Aeropyrum pernix (strain ATCC 700893 / DSM 11879 / JCM 9820 / NBRC 100138 / K1).